A 433-amino-acid chain; its full sequence is Signal recognition particle 54 kDa protein (433 aa).

GTP-binding positions include 106–113, 186–190, and 244–247; these read GVEGSGKT, DTAGR, and TKMD.

Belongs to the GTP-binding SRP family. SRP54 subfamily. As to quaternary structure, part of the signal recognition particle protein translocation system, which is composed of SRP and FtsY. Archaeal SRP consists of a 7S RNA molecule of 300 nucleotides and two protein subunits: SRP54 and SRP19.

It localises to the cytoplasm. It carries out the reaction GTP + H2O = GDP + phosphate + H(+). Its function is as follows. Involved in targeting and insertion of nascent membrane proteins into the cytoplasmic membrane. Binds to the hydrophobic signal sequence of the ribosome-nascent chain (RNC) as it emerges from the ribosomes. The SRP-RNC complex is then targeted to the cytoplasmic membrane where it interacts with the SRP receptor FtsY. The sequence is that of Signal recognition particle 54 kDa protein from Pyrobaculum aerophilum (strain ATCC 51768 / DSM 7523 / JCM 9630 / CIP 104966 / NBRC 100827 / IM2).